We begin with the raw amino-acid sequence, 453 residues long: MKFSTVILAAGKGTRMHSNMPKVLHTLAGKPMVKHVIDTCNNLGAQNIHLVYGHGGDQMQQALVNENVNWVLQAQQLGTGHAVDQASPHFQDDEKILVLYGDVPLISEDTIESLLEAQPTDGIALLTVVLEDPTGYGRIVRKRGPVVAIVEQKDASEEQKLIKEVNTGVLVATGRDLKRWLAGLNNNNAQGEYYLTDVIAAAHDEGRAVEAVHPSHSIEVEGVNDRIQLARLERAFQARQAKKLLEQGVMLRDPARFDLRGTLQCGSDVEIDVNVIIEGNVSIGNNVVIGAGSILKDCEIDDNTVIRPYSVIEGATVGENCTVGPFTRLRPGAELRDDAHVGNFVEMKNARLGEGSKANHLTYLGDAEIGKGVNVGAGVITCNYDGANKHKTVIGDDVFVGSDCQLVAPVTIGNGATIGAGTTLTKNVAEGELVITRAPERKIAGWQRPAKKK.

Positions 1–226 are pyrophosphorylase; that stretch reads MKFSTVILAA…SIEVEGVNDR (226 aa). Residues 8 to 11, Lys22, Gln73, 78 to 79, 100 to 102, Gly137, Glu151, Asn166, and Asn224 each bind UDP-N-acetyl-alpha-D-glucosamine; these read LAAG, GT, and YGD. Mg(2+) is bound at residue Asp102. Asn224 is a Mg(2+) binding site. The interval 227–247 is linker; it reads IQLARLERAFQARQAKKLLEQ. The tract at residues 248–453 is N-acetyltransferase; it reads GVMLRDPARF…AGWQRPAKKK (206 aa). UDP-N-acetyl-alpha-D-glucosamine-binding residues include Arg330 and Lys348. Residue His360 is the Proton acceptor of the active site. UDP-N-acetyl-alpha-D-glucosamine is bound by residues Tyr363 and Asn374. Acetyl-CoA is bound by residues Ala377, 383–384, Ser402, Ala420, and Arg437; that span reads NY.

This sequence in the N-terminal section; belongs to the N-acetylglucosamine-1-phosphate uridyltransferase family. The protein in the C-terminal section; belongs to the transferase hexapeptide repeat family. As to quaternary structure, homotrimer. Mg(2+) is required as a cofactor.

Its subcellular location is the cytoplasm. The catalysed reaction is alpha-D-glucosamine 1-phosphate + acetyl-CoA = N-acetyl-alpha-D-glucosamine 1-phosphate + CoA + H(+). The enzyme catalyses N-acetyl-alpha-D-glucosamine 1-phosphate + UTP + H(+) = UDP-N-acetyl-alpha-D-glucosamine + diphosphate. The protein operates within nucleotide-sugar biosynthesis; UDP-N-acetyl-alpha-D-glucosamine biosynthesis; N-acetyl-alpha-D-glucosamine 1-phosphate from alpha-D-glucosamine 6-phosphate (route II): step 2/2. Its pathway is nucleotide-sugar biosynthesis; UDP-N-acetyl-alpha-D-glucosamine biosynthesis; UDP-N-acetyl-alpha-D-glucosamine from N-acetyl-alpha-D-glucosamine 1-phosphate: step 1/1. It functions in the pathway bacterial outer membrane biogenesis; LPS lipid A biosynthesis. Functionally, catalyzes the last two sequential reactions in the de novo biosynthetic pathway for UDP-N-acetylglucosamine (UDP-GlcNAc). The C-terminal domain catalyzes the transfer of acetyl group from acetyl coenzyme A to glucosamine-1-phosphate (GlcN-1-P) to produce N-acetylglucosamine-1-phosphate (GlcNAc-1-P), which is converted into UDP-GlcNAc by the transfer of uridine 5-monophosphate (from uridine 5-triphosphate), a reaction catalyzed by the N-terminal domain. This is Bifunctional protein GlmU from Vibrio cholerae serotype O1 (strain M66-2).